The chain runs to 1285 residues: MTARGKNVKIQTLATENEIFLYDRRYVSEQDNADLPKLPSPQPLVLDKPPDTLSDRNDLQAWRNLYAARKTWAAELTERCEMADTSIRELNERTGIVNRAASVALENLKTHVAALENRFQEAQAWAKELSREQKSALEEWKRALANLENIPARKEFSFLGRPSTPKKDADRATGTLLDYVDAVEVQKAGPEASAASSRFAQQIQDIERAVGEITAGTQRLLDDVPNSRTDTADGLLQEIEPLSRKIQSDYEHVLGLSNNSKTLANISRLALNHTQDILPSMLEIAMEIRESLAAAVRQYDAATKSALGRTKLISAIQSRLADVQAHIANLTFQSDAFDLLYSVFHMPLVYGSVLIESVRRHEFNEKMKSDSLTLAEELSIFQDEEQRRRKKWVKNMEDFLSVTDTTTPGIEVNLRGHEFDWPIVTRKDIETYIEDLRSNPGTANAAQELAQAFKELDAPTRVQRRRAKAFKQGSIFDLSRSSLLLHSDEIVRSLRDEKLKLEEKLRGSESRIRKLEDLLHRHSHLGRPSSGNFSIDFPASPASPHPDPMSRRSSVSSRRLSSNQTSEEKNLVNRIVHLEADLAIERETVQRLQREADAERQSNTNKMQEAQSTKNDLIGNLEARQREFSDERRYLEGEVKRFKIRVEELEEELDRLTDSRDHEKQDADERMHQLELELQDAHARADAEMRKANNLLEQMQSHREAADRSKLRMDELEKQATERTQKDQEVRHALQAAFMNLSPGGSVPDEIVDIIKAIDVLSEGLTIHAKTAEDNAMKAAAENKTLIEQLEKMESNYENAKSASEQYQTQLTQAREEVEQEQSKVKAIESELNDERASLLELESKLAAGETGAGALREHVAEEEQKLNNMSQQLAETEARARRSEEEALQWRKRAEALSESDKQVAARIDIRTARLEELSRQLFGQVEKLERMLEQLGFTVIRQDGEIVVQRSSKVNALSATADTLSQSGVVSVKPDPSLLNWMQGEHPEEETERFNAFLESLHQFSVDIFGDAVVKRVKDIEVLARKWQKEARGYRDKYHRMQSEAHDKIAYRSFKEGDLALFLPTRNQAIRSWAAFNVGAPHYFLREQDVHKLQARDWLLARITKIEERVVDLSKSMNGGNPDRRSIGEASDGASIDDENPFELSDGLRWYLLDATEEKPGAPATPGLGKSTVAPAHVDAKGSIRLKRTPAGGNVTKTLTRSLDSRRNSSASASIKRGTPPSRANDSTTDLVRPAQAESESIAAATDSKSQSQSQSQERERRQEAQGTAVIFDEVRRDQLQGP.

A disordered region spans residues 32-52 (NADLPKLPSPQPLVLDKPPDT). Coiled coils occupy residues 73–150 (AAEL…LENI) and 486–523 (HSDE…HRHS). Disordered stretches follow at residues 523–568 (SHLG…TSEE) and 595–615 (EADA…STKN). Residues 551-562 (RRSSVSSRRLSS) are compositionally biased toward low complexity. Coiled coils occupy residues 563–726 (NQTS…RTQK) and 769–937 (AKTA…LEQL). Residues 601-615 (QSNTNKMQEAQSTKN) show a composition bias toward polar residues. Disordered regions lie at residues 1116–1142 (SKSM…DDEN) and 1181–1285 (DAKG…LQGP). The span at 1197–1215 (VTKTLTRSLDSRRNSSASA) shows a compositional bias: polar residues. Positions 1275 to 1285 (DEVRRDQLQGP) are enriched in basic and acidic residues.

Belongs to the ATG11 family. Homodimer.

The protein localises to the preautophagosomal structure membrane. It is found in the vacuole membrane. Involved in cytoplasm to vacuole transport (Cvt), pexophagy, mitophagy and nucleophagy. Recruits mitochondria for their selective degradation via autophagy (mitophagy) during starvation. Works as scaffold proteins that recruit ATG proteins to the pre-autophagosome (PAS), the site of vesicle/autophagosome formation. Required for the Cvt vesicles completion. The protein is Autophagy-related protein 11 (atg11) of Emericella nidulans (strain FGSC A4 / ATCC 38163 / CBS 112.46 / NRRL 194 / M139) (Aspergillus nidulans).